The primary structure comprises 383 residues: uncharacterized protein (383 aa).

Residues cysteine 12, cysteine 18, cysteine 21, and cysteine 88 each coordinate [4Fe-4S] cluster. Glutamine 219, phenylalanine 246, glutamate 267, and aspartate 314 together coordinate S-adenosyl-L-methionine. Cysteine 341 functions as the Nucleophile in the catalytic mechanism.

The protein belongs to the class I-like SAM-binding methyltransferase superfamily. RNA M5U methyltransferase family.

This is an uncharacterized protein from Protochlamydia amoebophila (strain UWE25).